The sequence spans 462 residues: Toxin CqTX-A (462 aa).

The N-terminal stretch at Met-1–Ala-19 is a signal peptide. A glycan (N-linked (GlcNAc...) asparagine) is linked at Asn-174.

Belongs to the jellyfish toxin family. Type I subfamily. Post-translationally, contains disulfide bonds. In terms of processing, N-glycosylated.

The protein localises to the secreted. The protein resides in the nematocyst. Its subcellular location is the target cell membrane. In terms of biological role, critical allergen and main toxic protein of C.quadrigatus venom. Has potent hemolytic activity. Is lethal to crayfish. Causes cutaneous inflammation in humans. May act as a pore-forming toxin, disrupting normal transmembrane ion concentration gradients in susceptible cells. This is Toxin CqTX-A from Chiropsoides quadrigatus (Box jellyfish).